An 87-amino-acid chain; its full sequence is Large ribosomal subunit protein bL31B (87 aa).

The protein belongs to the bacterial ribosomal protein bL31 family. Type B subfamily. Part of the 50S ribosomal subunit.

This chain is Large ribosomal subunit protein bL31B, found in Burkholderia pseudomallei (strain 1106a).